Here is a 247-residue protein sequence, read N- to C-terminus: Auxin-responsive protein IAA13 (247 aa).

Residues 14–18 carry the EAR-like (transcriptional repression) motif; sequence LELGL. Positions 25-40 are enriched in gly residues; it reads GTAAKIGKSGGGGAWG. Disordered stretches follow at residues 25 to 44 and 49 to 119; these read GTAA…ERGR and KDFP…PKDV. The segment covering 62–75 has biased composition (low complexity); sequence SASHAGSSPPRSSS. Residues 87 to 98 are compositionally biased toward polar residues; sequence RMNSLVNNQATK. The segment covering 106–119 has biased composition (basic and acidic residues); it reads AGKKKVKDDEPKDV. Residues 129-225 form the PB1 domain; the sequence is VGFIKVNMDG…SVKRLRVMKT (97 aa).

Belongs to the Aux/IAA family. As to quaternary structure, homodimers and heterodimers. Interacts with TPL. In terms of tissue distribution, preferentially expressed in stems.

The protein resides in the nucleus. In terms of biological role, aux/IAA proteins are short-lived transcriptional factors that function as repressors of early auxin response genes at low auxin concentrations. Repression is thought to result from the interaction with auxin response factors (ARFs), proteins that bind to the auxin-responsive promoter element (AuxRE). Formation of heterodimers with ARF proteins may alter their ability to modulate early auxin response genes expression. In Arabidopsis thaliana (Mouse-ear cress), this protein is Auxin-responsive protein IAA13 (IAA13).